A 262-amino-acid polypeptide reads, in one-letter code: uncharacterized protein (262 aa).

A helical transmembrane segment spans residues 13–35 (VVGALLTVVVIVTAAGIIYVISH).

It localises to the membrane. This is an uncharacterized protein from Archaeoglobus fulgidus (strain ATCC 49558 / DSM 4304 / JCM 9628 / NBRC 100126 / VC-16).